A 127-amino-acid polypeptide reads, in one-letter code: Fluoride-specific ion channel FluC (127 aa).

4 consecutive transmembrane segments (helical) span residues 3 to 23 (ALLL…LLGV), 36 to 56 (GTFA…GGLA), 72 to 92 (VGAL…ALMI), and 101 to 121 (FAYS…GLLL). Residues glycine 76 and threonine 79 each coordinate Na(+).

The protein belongs to the fluoride channel Fluc/FEX (TC 1.A.43) family.

It is found in the cell inner membrane. The enzyme catalyses fluoride(in) = fluoride(out). Its activity is regulated as follows. Na(+) is not transported, but it plays an essential structural role and its presence is essential for fluoride channel function. Its function is as follows. Fluoride-specific ion channel. Important for reducing fluoride concentration in the cell, thus reducing its toxicity. The chain is Fluoride-specific ion channel FluC from Phenylobacterium zucineum (strain HLK1).